The primary structure comprises 338 residues: UDP-3-O-acylglucosamine N-acyltransferase (338 aa).

Histidine 243 acts as the Proton acceptor in catalysis.

It belongs to the transferase hexapeptide repeat family. LpxD subfamily. In terms of assembly, homotrimer.

The catalysed reaction is a UDP-3-O-[(3R)-3-hydroxyacyl]-alpha-D-glucosamine + a (3R)-hydroxyacyl-[ACP] = a UDP-2-N,3-O-bis[(3R)-3-hydroxyacyl]-alpha-D-glucosamine + holo-[ACP] + H(+). The protein operates within bacterial outer membrane biogenesis; LPS lipid A biosynthesis. In terms of biological role, catalyzes the N-acylation of UDP-3-O-acylglucosamine using 3-hydroxyacyl-ACP as the acyl donor. Is involved in the biosynthesis of lipid A, a phosphorylated glycolipid that anchors the lipopolysaccharide to the outer membrane of the cell. The chain is UDP-3-O-acylglucosamine N-acyltransferase from Amoebophilus asiaticus (strain 5a2).